Here is a 173-residue protein sequence, read N- to C-terminus: MDIAIQHPWFKRALGPFYPSRLFDQFFGEGLFEYDLLPFLSSTISPYYRQSLFRTVLDSGISEVRSDRDKFVIFLDVKHFSPEDLTVKVQEDFVEIHGKHNERQDDHGYISREFHRRYRLPSNVDQSALSCSLSADGMLTFSGPKVPSGVDAGHSERAIPVSREEKPSSAPSS.

Met-1 carries the post-translational modification N-acetylmethionine. The tract at residues 1–63 (MDIAIQHPWF…RTVLDSGISE (63 aa)) is required for complex formation with BFSP1 and BFSP2. Gln-6 is modified (deamidated glutamine; partial). Residue Ser-45 is modified to Phosphoserine. Gln-50 is subject to Deamidated glutamine; partial. One can recognise a sHSP domain in the interval 52-162 (LFRTVLDSGI…GHSERAIPVS (111 aa)). The residue at position 70 (Lys-70) is an N6-acetyllysine. Gln-90 is modified (deamidated glutamine; partial). Lys-99 is modified (N6-acetyllysine). His-100 serves as a coordination point for Zn(2+). Asn-101 carries the post-translational modification Deamidated asparagine; partial. Residues Glu-102 and His-107 each contribute to the Zn(2+) site. Ser-122 is modified (phosphoserine). At Asn-123 the chain carries Deamidated asparagine; partial. The tract at residues 144–173 (PKVPSGVDAGHSERAIPVSREEKPSSAPSS) is disordered. The segment covering 153–167 (GHSERAIPVSREEKP) has biased composition (basic and acidic residues). Residue His-154 participates in Zn(2+) binding. An O-linked (GlcNAc) serine glycan is attached at Ser-162.

Belongs to the small heat shock protein (HSP20) family. As to quaternary structure, heteromer composed of three CRYAA and one CRYAB subunits. Inter-subunit bridging via zinc ions enhances stability, which is crucial as there is no protein turn over in the lens. Can also form homodimers and homotetramers (dimers of dimers) which serve as the building blocks of homooligomers. Within homooligomers, the zinc-binding motif is created from residues of 3 different molecules. His-100 and Glu-102 from one molecule are ligands of the zinc ion, and His-107 and His-154 residues from additional molecules complete the site with tetrahedral coordination geometry. Part of a complex required for lens intermediate filament formation composed of BFSP1, BFSP2 and CRYAA. Post-translationally, acetylation at Lys-70 may increase chaperone activity. In terms of processing, undergoes age-dependent proteolytical cleavage at the C-terminus.

The protein resides in the cytoplasm. It is found in the nucleus. Contributes to the transparency and refractive index of the lens. Acts as a chaperone, preventing aggregation of various proteins under a wide range of stress conditions. Required for the correct formation of lens intermediate filaments as part of a complex composed of BFSP1, BFSP2 and CRYAA. This chain is Alpha-crystallin A chain (CRYAA), found in Pteropus poliocephalus (Grey-headed flying fox).